Reading from the N-terminus, the 404-residue chain is Alanine racemase (404 aa).

Residue lysine 34 is the Proton acceptor; specific for D-alanine of the active site. Lysine 34 is modified (N6-(pyridoxal phosphate)lysine). Position 133 (arginine 133) interacts with substrate. Residues 226 to 273 enclose the RPE1 insert domain; sequence EVSSNLSYTEEFESNTAALTTTACINKCPDVSVRLTPKLPLKGSYTVR. Catalysis depends on tyrosine 298, which acts as the Proton acceptor; specific for L-alanine. Methionine 346 is a binding site for substrate.

Belongs to the alanine racemase family. It depends on pyridoxal 5'-phosphate as a cofactor.

The enzyme catalyses L-alanine = D-alanine. It participates in amino-acid biosynthesis; D-alanine biosynthesis; D-alanine from L-alanine: step 1/1. In terms of biological role, catalyzes the interconversion of L-alanine and D-alanine. May also act on other amino acids. The protein is Alanine racemase (alr) of Rickettsia prowazekii (strain Madrid E).